Consider the following 274-residue polypeptide: Diaminopimelate epimerase (274 aa).

Positions 11, 44, and 64 each coordinate substrate. Cysteine 73 (proton donor) is an active-site residue. Residues 74 to 75 (GN), asparagine 157, asparagine 190, and 208 to 209 (ER) contribute to the substrate site. Cysteine 217 (proton acceptor) is an active-site residue. 218-219 (GS) is a binding site for substrate.

The protein belongs to the diaminopimelate epimerase family. As to quaternary structure, homodimer.

It is found in the cytoplasm. The enzyme catalyses (2S,6S)-2,6-diaminopimelate = meso-2,6-diaminopimelate. It participates in amino-acid biosynthesis; L-lysine biosynthesis via DAP pathway; DL-2,6-diaminopimelate from LL-2,6-diaminopimelate: step 1/1. Its function is as follows. Catalyzes the stereoinversion of LL-2,6-diaminopimelate (L,L-DAP) to meso-diaminopimelate (meso-DAP), a precursor of L-lysine and an essential component of the bacterial peptidoglycan. The polypeptide is Diaminopimelate epimerase (Edwardsiella ictaluri (strain 93-146)).